The chain runs to 168 residues: Transcription antitermination protein NusB (168 aa).

Belongs to the NusB family.

Its function is as follows. Involved in transcription antitermination. Required for transcription of ribosomal RNA (rRNA) genes. Binds specifically to the boxA antiterminator sequence of the ribosomal RNA (rrn) operons. The polypeptide is Transcription antitermination protein NusB (Chlamydia trachomatis serovar D (strain ATCC VR-885 / DSM 19411 / UW-3/Cx)).